Here is a 218-residue protein sequence, read N- to C-terminus: Small ribosomal subunit protein uS3 (218 aa).

Positions 38–106 constitute a KH type-2 domain; sequence VREYINKRLQ…RVHINIVEIK (69 aa).

The protein belongs to the universal ribosomal protein uS3 family. Part of the 30S ribosomal subunit. Forms a tight complex with proteins S10 and S14.

Its function is as follows. Binds the lower part of the 30S subunit head. Binds mRNA in the 70S ribosome, positioning it for translation. This chain is Small ribosomal subunit protein uS3, found in Geobacillus thermodenitrificans (strain NG80-2).